Reading from the N-terminus, the 542-residue chain is Chaperonin GroEL (542 aa).

Residues 29–32, Lys50, 86–90, Gly415, and Asp495 contribute to the ATP site; these read TLGP and DGTTT.

This sequence belongs to the chaperonin (HSP60) family. In terms of assembly, forms a cylinder of 14 subunits composed of two heptameric rings stacked back-to-back. Interacts with the co-chaperonin GroES.

The protein localises to the cytoplasm. It catalyses the reaction ATP + H2O + a folded polypeptide = ADP + phosphate + an unfolded polypeptide.. In terms of biological role, together with its co-chaperonin GroES, plays an essential role in assisting protein folding. The GroEL-GroES system forms a nano-cage that allows encapsulation of the non-native substrate proteins and provides a physical environment optimized to promote and accelerate protein folding. This is Chaperonin GroEL from Azobacteroides pseudotrichonymphae genomovar. CFP2.